Consider the following 50-residue polypeptide: Large ribosomal subunit protein bL33 (50 aa).

It belongs to the bacterial ribosomal protein bL33 family.

This Hydrogenovibrio crunogenus (strain DSM 25203 / XCL-2) (Thiomicrospira crunogena) protein is Large ribosomal subunit protein bL33.